Consider the following 186-residue polypeptide: Sec-independent protein translocase protein TatB (186 aa).

Residues 1 to 21 (MFDIGFSELILLMVLGLVVLG) traverse the membrane as a helical segment. Residues 162–186 (LSSYYPPDDIEIAPASKSQSSKTKS) form a disordered region. Residues 177–186 (SKSQSSKTKS) are compositionally biased toward polar residues.

It belongs to the TatB family. In terms of assembly, the Tat system comprises two distinct complexes: a TatABC complex, containing multiple copies of TatA, TatB and TatC subunits, and a separate TatA complex, containing only TatA subunits. Substrates initially bind to the TatABC complex, which probably triggers association of the separate TatA complex to form the active translocon.

The protein localises to the cell inner membrane. Part of the twin-arginine translocation (Tat) system that transports large folded proteins containing a characteristic twin-arginine motif in their signal peptide across membranes. Together with TatC, TatB is part of a receptor directly interacting with Tat signal peptides. TatB may form an oligomeric binding site that transiently accommodates folded Tat precursor proteins before their translocation. The protein is Sec-independent protein translocase protein TatB of Haemophilus influenzae (strain 86-028NP).